Here is a 129-residue protein sequence, read N- to C-terminus: UPF0325 protein YPTS_3127 (129 aa).

It belongs to the UPF0325 family.

This is UPF0325 protein YPTS_3127 from Yersinia pseudotuberculosis serotype IB (strain PB1/+).